Here is a 415-residue protein sequence, read N- to C-terminus: Mitogen-activated protein kinase kinae MST7 (415 aa).

The tract at residues 1 to 37 (MADPFAPRTMKRRNVKGLALTPAAPKPPPTAENAPIH) is disordered. The region spanning 61–326 (LEVIKDLGSG…EELFERDPFV (266 aa)) is the Protein kinase domain. ATP is bound by residues 67–75 (LGSGNGGTV) and K90. Positions 363–409 (DLLRSSDSPTATYHGDDRPLETPTSAYRVDPRRGPAEGSAGLADQVD) are disordered.

It belongs to the protein kinase superfamily. STE Ser/Thr protein kinase family. MAP kinase kinase subfamily. Homodimer. Interacts with the adapter protein MST50. Interacts with TRX2.

It carries out the reaction L-seryl-[protein] + ATP = O-phospho-L-seryl-[protein] + ADP + H(+). The enzyme catalyses L-threonyl-[protein] + ATP = O-phospho-L-threonyl-[protein] + ADP + H(+). Functionally, mitogen-activated protein kinase kinase; part of the MST11-MST7-PMK1 MAP kinase (MAPK) cascade that is essential for appressorium formation, penetration and invasive growth. The MST11-MST7-PMK1 MAP kinase cascade transduces signals from the cell surface sensors MDB2 and SHO1 that recognize various surface signals such as surface hydrophobicity, cutin monomers, and rice leaf waxes. MST7 acts as the upstream MAPKK that directly phosphorylates MAP kinase PMK1. The chain is Mitogen-activated protein kinase kinae MST7 from Pyricularia oryzae (strain 70-15 / ATCC MYA-4617 / FGSC 8958) (Rice blast fungus).